Consider the following 129-residue polypeptide: ATP synthase epsilon chain (129 aa).

The protein belongs to the ATPase epsilon chain family. As to quaternary structure, F-type ATPases have 2 components, CF(1) - the catalytic core - and CF(0) - the membrane proton channel. CF(1) has five subunits: alpha(3), beta(3), gamma(1), delta(1), epsilon(1). CF(0) has three main subunits: a, b and c.

The protein resides in the cell inner membrane. Its function is as follows. Produces ATP from ADP in the presence of a proton gradient across the membrane. The chain is ATP synthase epsilon chain from Campylobacter curvus (strain 525.92).